A 100-amino-acid chain; its full sequence is MAKKSMIARDVKRKKLVERYAAKRKSLIDAFKSAKDPMERLEIHRKIQALPRNCAPNRIRNRCWATGKPRGVYRDFGLCRNQLRSRAHNGELPGVVKSSW.

It belongs to the universal ribosomal protein uS14 family. In terms of assembly, part of the 30S ribosomal subunit. Contacts proteins S3 and S10.

In terms of biological role, binds 16S rRNA, required for the assembly of 30S particles and may also be responsible for determining the conformation of the 16S rRNA at the A site. This Prochlorococcus marinus (strain NATL1A) protein is Small ribosomal subunit protein uS14.